Here is a 541-residue protein sequence, read N- to C-terminus: Cytochrome P450 monooxygenase claW (541 aa).

The chain crosses the membrane as a helical span at residues 12-32 (VINALVILFSFWAFLSLIRVI). Heme is bound at residue C480.

Belongs to the cytochrome P450 family. Heme is required as a cofactor.

It is found in the membrane. Its pathway is secondary metabolite biosynthesis; terpenoid biosynthesis. Its function is as follows. Cytochrome P450 monooxygenase; part of the gene cluster that mediates the biosynthesis of clavilactone A, a meroterpenoid that features a unique benzo-fused ten-membered carbocyclic ring unit with an alpha,beta-epoxy-gamma-lactone moiety, forming an intriguing 10/5/3 tricyclic nested skeleton. Cytochrome P450 monooxygenases claO, claP, claQ, claU, and claW are close orthologs, suggesting that a redundant function or pseudogenes are present in the cla cluster. These monoxygenases are not involved in clavilactone A biosynthesis nor its modification. ClaR, ClaS and ClaT are sufficient to produce clavilactone A. The biosynthesis begins with the prenyltransferase claS that transfers geranyl pyrophosphate (GPP) to hydroquinone to produces geranylhydroquinone. The cytochrome P450 monooxygenase claR then catalyzes the diradical coupling reaction between the intramolecular hydroquinone and allyl moieties to form the benzo-fused ten-membered carbocyclic ring unit of wigantol. Finally the cytochrome P450 monooxygenase claT exquisitely and stereoselectively assembles the alpha,beta-epoxy-gamma-lactone moiety, producing clavilactone A via arnebinol A. This Ampulloclitocybe clavipes (Club foot) protein is Cytochrome P450 monooxygenase claW.